We begin with the raw amino-acid sequence, 807 residues long: Ribosomal RNA large subunit methyltransferase K/L (807 aa).

Residues 67–182 (QIYKICLWSR…EKQAEIFLDL (116 aa)) enclose the THUMP domain. Over residues 548–560 (NTQYGNPEASAQS) the composition is skewed to polar residues. The interval 548 to 602 (NTQYGNPEASAQSKESKNAPEPKKDNRNRYKGNKFQQAREEAKRQEAQRLAQKKR) is disordered. Basic and acidic residues-rich tracts occupy residues 561–575 (KESK…DNRN) and 584–594 (QAREEAKRQEA).

Belongs to the methyltransferase superfamily. RlmKL family.

The protein resides in the cytoplasm. It catalyses the reaction guanosine(2445) in 23S rRNA + S-adenosyl-L-methionine = N(2)-methylguanosine(2445) in 23S rRNA + S-adenosyl-L-homocysteine + H(+). It carries out the reaction guanosine(2069) in 23S rRNA + S-adenosyl-L-methionine = N(2)-methylguanosine(2069) in 23S rRNA + S-adenosyl-L-homocysteine + H(+). In terms of biological role, specifically methylates the guanine in position 2445 (m2G2445) and the guanine in position 2069 (m7G2069) of 23S rRNA. The chain is Ribosomal RNA large subunit methyltransferase K/L from Psychrobacter sp. (strain PRwf-1).